The sequence spans 118 residues: Large ribosomal subunit protein uL24 (118 aa).

The segment at 1 to 24 is disordered; that stretch reads MSEQPHKQRTRTKRASLHEKQDQV.

Belongs to the universal ribosomal protein uL24 family. As to quaternary structure, part of the 50S ribosomal subunit.

In terms of biological role, one of two assembly initiator proteins, it binds directly to the 5'-end of the 23S rRNA, where it nucleates assembly of the 50S subunit. Functionally, located at the polypeptide exit tunnel on the outside of the subunit. The protein is Large ribosomal subunit protein uL24 of Halobacterium salinarum (strain ATCC 700922 / JCM 11081 / NRC-1) (Halobacterium halobium).